We begin with the raw amino-acid sequence, 391 residues long: 3-ketoacyl-CoA thiolase (391 aa).

C95 acts as the Acyl-thioester intermediate in catalysis. Residues H347 and C377 each act as proton acceptor in the active site.

It belongs to the thiolase-like superfamily. Thiolase family. Heterotetramer of two alpha chains (FadB) and two beta chains (FadA).

The protein resides in the cytoplasm. It catalyses the reaction an acyl-CoA + acetyl-CoA = a 3-oxoacyl-CoA + CoA. Its pathway is lipid metabolism; fatty acid beta-oxidation. Functionally, catalyzes the final step of fatty acid oxidation in which acetyl-CoA is released and the CoA ester of a fatty acid two carbons shorter is formed. The polypeptide is 3-ketoacyl-CoA thiolase (Pseudomonas putida (strain ATCC 700007 / DSM 6899 / JCM 31910 / BCRC 17059 / LMG 24140 / F1)).